The sequence spans 98 residues: MPPIYINIILAYTASLVGLLMYRSHFMSSLLCLEGMMLSLFILATILSLNLHFTLSFTLPIILLIFAGCETAVGLALLVMISDIYGLDHVQNLNLLQC.

Helical transmembrane passes span 1 to 21 (MPPI…GLLM), 29 to 49 (SLLC…ILSL), and 61 to 81 (IILL…LVMI).

It belongs to the complex I subunit 4L family. In terms of assembly, core subunit of respiratory chain NADH dehydrogenase (Complex I) which is composed of 45 different subunits.

The protein resides in the mitochondrion inner membrane. The enzyme catalyses a ubiquinone + NADH + 5 H(+)(in) = a ubiquinol + NAD(+) + 4 H(+)(out). Functionally, core subunit of the mitochondrial membrane respiratory chain NADH dehydrogenase (Complex I) which catalyzes electron transfer from NADH through the respiratory chain, using ubiquinone as an electron acceptor. Part of the enzyme membrane arm which is embedded in the lipid bilayer and involved in proton translocation. The chain is NADH-ubiquinone oxidoreductase chain 4L (MT-ND4L) from Galeopterus variegatus (Malayan flying lemur).